We begin with the raw amino-acid sequence, 483 residues long: Aspartyl/glutamyl-tRNA(Asn/Gln) amidotransferase subunit B (483 aa).

It belongs to the GatB/GatE family. GatB subfamily. As to quaternary structure, heterotrimer of A, B and C subunits.

It catalyses the reaction L-glutamyl-tRNA(Gln) + L-glutamine + ATP + H2O = L-glutaminyl-tRNA(Gln) + L-glutamate + ADP + phosphate + H(+). The catalysed reaction is L-aspartyl-tRNA(Asn) + L-glutamine + ATP + H2O = L-asparaginyl-tRNA(Asn) + L-glutamate + ADP + phosphate + 2 H(+). Functionally, allows the formation of correctly charged Asn-tRNA(Asn) or Gln-tRNA(Gln) through the transamidation of misacylated Asp-tRNA(Asn) or Glu-tRNA(Gln) in organisms which lack either or both of asparaginyl-tRNA or glutaminyl-tRNA synthetases. The reaction takes place in the presence of glutamine and ATP through an activated phospho-Asp-tRNA(Asn) or phospho-Glu-tRNA(Gln). This is Aspartyl/glutamyl-tRNA(Asn/Gln) amidotransferase subunit B from Roseiflexus castenholzii (strain DSM 13941 / HLO8).